A 439-amino-acid polypeptide reads, in one-letter code: O-methyltransferase aurJ (439 aa).

Aspartate 283 serves as a coordination point for S-adenosyl-L-methionine. The active-site Proton acceptor is the histidine 338.

This sequence belongs to the class I-like SAM-binding methyltransferase superfamily. Cation-independent O-methyltransferase family. COMT subfamily.

The enzyme catalyses norrubrofusarin + S-adenosyl-L-methionine = rubrofusarin + S-adenosyl-L-homocysteine + H(+). The protein operates within pigment biosynthesis. Functionally, O-methyltransferase; part of the gene cluster that mediates the biosynthesis of aurofusarin, a red mycelium pigment which is acting as a mycotoxin. The first step is performed by the polyketide synthase which condenses one acetyl-CoA and 6 malonyl-CoA units to form the first intermediate, the cyclic heptaketide and yellow pigment YWA1. The C2 hydroxyl group in the pyrone ring of YWA1 is probably formed during ring closure by an aldol-type cyclization reaction. The dehydratase aurZ then acts as the first tailoring enzyme in the aurofusarin biosynthetic pathway by converting YWA1 to nor-rubrofusarin. Nor-rubrofusarin is then methylated to rubrofusarin by the O-methyltransferase aurJ. Rubrofusarin is then transported across the plasma membrane by the rubrofusarin-specific pump aurT for further enzymatic processing by the extracellular complex composed of GIP1, aurF, aurO and aurS to yield aurofusarin. The protein is O-methyltransferase aurJ of Gibberella zeae (strain ATCC MYA-4620 / CBS 123657 / FGSC 9075 / NRRL 31084 / PH-1) (Wheat head blight fungus).